A 143-amino-acid polypeptide reads, in one-letter code: Large ribosomal subunit protein uL11 (143 aa).

This sequence belongs to the universal ribosomal protein uL11 family. As to quaternary structure, part of the ribosomal stalk of the 50S ribosomal subunit. Interacts with L10 and the large rRNA to form the base of the stalk. L10 forms an elongated spine to which L12 dimers bind in a sequential fashion forming a multimeric L10(L12)X complex. One or more lysine residues are methylated.

Its function is as follows. Forms part of the ribosomal stalk which helps the ribosome interact with GTP-bound translation factors. This Thiobacillus denitrificans (strain ATCC 25259 / T1) protein is Large ribosomal subunit protein uL11.